The chain runs to 208 residues: Ribosomal RNA large subunit methyltransferase E (208 aa).

S-adenosyl-L-methionine contacts are provided by Gly61, Trp63, Asp81, Asp97, and Asp122. Residue Lys162 is the Proton acceptor of the active site.

The protein belongs to the class I-like SAM-binding methyltransferase superfamily. RNA methyltransferase RlmE family.

Its subcellular location is the cytoplasm. The catalysed reaction is uridine(2552) in 23S rRNA + S-adenosyl-L-methionine = 2'-O-methyluridine(2552) in 23S rRNA + S-adenosyl-L-homocysteine + H(+). Specifically methylates the uridine in position 2552 of 23S rRNA at the 2'-O position of the ribose in the fully assembled 50S ribosomal subunit. The polypeptide is Ribosomal RNA large subunit methyltransferase E (Pseudomonas entomophila (strain L48)).